The chain runs to 116 residues: Ribosome-binding factor A (116 aa).

This sequence belongs to the RbfA family. As to quaternary structure, monomer. Binds 30S ribosomal subunits, but not 50S ribosomal subunits or 70S ribosomes.

It is found in the cytoplasm. In terms of biological role, one of several proteins that assist in the late maturation steps of the functional core of the 30S ribosomal subunit. Associates with free 30S ribosomal subunits (but not with 30S subunits that are part of 70S ribosomes or polysomes). Required for efficient processing of 16S rRNA. May interact with the 5'-terminal helix region of 16S rRNA. The protein is Ribosome-binding factor A of Malacoplasma penetrans (strain HF-2) (Mycoplasma penetrans).